Reading from the N-terminus, the 701-residue chain is T-cell immunomodulatory protein homolog (701 aa).

The N-terminal stretch at 1 to 29 (MVKCGKYVLILELLLLTLLYNLIKRVSNS) is a signal peptide. The Extracellular segment spans residues 30–657 (GETVSSFVDG…IQLSVNPSNK (628 aa)). 7 N-linked (GlcNAc...) asparagine glycosylation sites follow: asparagine 148, asparagine 180, asparagine 217, asparagine 258, asparagine 458, asparagine 522, and asparagine 571. Residues 658–678 (FYSIIYITLICLSVIGVLIFI) form a helical membrane-spanning segment. The Cytoplasmic portion of the chain corresponds to 679 to 701 (LDRKEKIEDSKEEMGFKSHFVIG).

It belongs to the TIP family.

It is found in the membrane. Its function is as follows. May protect the parasite against attack by the host immune system by immunomodulation. The chain is T-cell immunomodulatory protein homolog from Plasmodium yoelii yoelii.